Consider the following 242-residue polypeptide: Small ribosomal subunit protein uS3 (242 aa).

A KH type-2 domain is found at 39-110; sequence IRKFIHKKYG…QVRINVVEVE (72 aa). The disordered stretch occupies residues 216-242; the sequence is QPMPVGAAPRRRASRRPQQFEDRSNEG. Residues 233 to 242 show a composition bias toward basic and acidic residues; it reads QQFEDRSNEG.

It belongs to the universal ribosomal protein uS3 family. Part of the 30S ribosomal subunit. Forms a tight complex with proteins S10 and S14.

Its function is as follows. Binds the lower part of the 30S subunit head. Binds mRNA in the 70S ribosome, positioning it for translation. The sequence is that of Small ribosomal subunit protein uS3 from Synechococcus sp. (strain CC9605).